The sequence spans 1598 residues: Serine/threonine-protein kinase Nek1 (1598 aa).

Residues 106 to 380 (YEVIRQIGAG…ALQCLGYTIF (275 aa)) form the Protein kinase domain. Residues 112–120 (IGAGRFGEV) and Lys-135 each bind ATP. The active-site Proton acceptor is the Asp-240.

It belongs to the protein kinase superfamily. NEK Ser/Thr protein kinase family. NIMA subfamily.

It is found in the cytoplasm. Its subcellular location is the cytoskeleton. It localises to the microtubule organizing center. The protein resides in the centrosome. The protein localises to the spindle pole. It catalyses the reaction L-seryl-[protein] + ATP = O-phospho-L-seryl-[protein] + ADP + H(+). It carries out the reaction L-threonyl-[protein] + ATP = O-phospho-L-threonyl-[protein] + ADP + H(+). Phosphorylation status of the T-loop (amino acids 267-293) modulates kinase activity and subcellular localization of the protein. Its function is as follows. Probable serine/threonine-protein kinase. Involved in controlling centrosome splitting. Promotes separation of the centrosome outer cores. The protein is Serine/threonine-protein kinase Nek1 of Toxoplasma gondii (strain ATCC 50611 / Me49).